Reading from the N-terminus, the 138-residue chain is Ferredoxin-2 (138 aa).

A 2Fe-2S ferredoxin-type domain is found at A27–H117. The [2Fe-2S] cluster site is built by C62, C67, C70, and C100.

The protein belongs to the 2Fe2S plant-type ferredoxin family. The cofactor is [2Fe-2S] cluster.

In terms of biological role, ferredoxins are iron-sulfur proteins that transfer electrons in a wide variety of metabolic reactions. This chain is Ferredoxin-2 (fer2), found in Haloarcula marismortui (strain ATCC 43049 / DSM 3752 / JCM 8966 / VKM B-1809) (Halobacterium marismortui).